We begin with the raw amino-acid sequence, 906 residues long: Protein translocase subunit SecA (906 aa).

ATP is bound by residues Gln86, 104–108 (GEGKT), and Asp499. Positions 863–885 (PVVSRIDPKDRNPDDPTSWGRVS) are disordered. Zn(2+) is bound by residues Cys890, Cys892, Cys901, and His902.

Belongs to the SecA family. In terms of assembly, monomer and homodimer. Part of the essential Sec protein translocation apparatus which comprises SecA, SecYEG and auxiliary proteins SecDF-YajC and YidC. The cofactor is Zn(2+).

It localises to the cell inner membrane. It is found in the cytoplasm. The catalysed reaction is ATP + H2O + cellular proteinSide 1 = ADP + phosphate + cellular proteinSide 2.. Part of the Sec protein translocase complex. Interacts with the SecYEG preprotein conducting channel. Has a central role in coupling the hydrolysis of ATP to the transfer of proteins into and across the cell membrane, serving both as a receptor for the preprotein-SecB complex and as an ATP-driven molecular motor driving the stepwise translocation of polypeptide chains across the membrane. The polypeptide is Protein translocase subunit SecA (Rickettsia akari (strain Hartford)).